Consider the following 266-residue polypeptide: Luciferase (266 aa).

Residues 22–41 (GLAVTCCAVAVASIIAFPYI) traverse the membrane as a helical segment.

This sequence belongs to the fungal luciferase family.

The protein resides in the membrane. The enzyme catalyses 3-hydroxyhispidin + O2 = (E)-caffeoylpyruvate + hnu + CO2. It carries out the reaction 3-hydroxyhispidin + O2 = 4-[(E)-2-(3,4-dihydroxyphenyl)ethenyl]-1,7-dihydroxy-2,3,5-trioxabicyclo[2.2.2]oct-7-en-6-one. Luciferase; part of the gene cluster that mediates the fungal bioluminescence cycle. Uses the fungal luciferin 3-hydroxyhispidin as a substrate to produce an endoperoxide as a high-energy intermediate with decomposition that yields oxyluciferin (also known as caffeoylpyruvate) and light emission. The fungal bioluminescence cycle begins with the hispidin synthetase that catalyzes the formation of hispidin which is further hydroxylated by the hispidin-3-hydroxylase, yielding the fungal luciferin 3-hydroxyhispidin. The luciferase then produces an endoperoxide as a high-energy intermediate with decomposition that yields oxyluciferin and light emission. Oxyluciferin can be recycled to caffeic acid by caffeoylpyruvate hydrolase. The chain is Luciferase from Armillaria mellea (Honey mushroom).